The sequence spans 351 residues: Peptide chain release factor 1 (351 aa).

Glutamine 229 is modified (N5-methylglutamine).

This sequence belongs to the prokaryotic/mitochondrial release factor family. Post-translationally, methylated by PrmC. Methylation increases the termination efficiency of RF1.

It is found in the cytoplasm. Peptide chain release factor 1 directs the termination of translation in response to the peptide chain termination codons UAG and UAA. In Dinoroseobacter shibae (strain DSM 16493 / NCIMB 14021 / DFL 12), this protein is Peptide chain release factor 1.